A 20-amino-acid polypeptide reads, in one-letter code: Unknown protein NF007 from 2D-PAGE (20 aa).

The polypeptide is Unknown protein NF007 from 2D-PAGE (Naegleria fowleri (Brain eating amoeba)).